The primary structure comprises 451 residues: Phosphoglucosamine mutase (451 aa).

Serine 102 acts as the Phosphoserine intermediate in catalysis. Residues serine 102, aspartate 243, aspartate 245, and aspartate 247 each contribute to the Mg(2+) site. At serine 102 the chain carries Phosphoserine.

It belongs to the phosphohexose mutase family. The cofactor is Mg(2+). Activated by phosphorylation.

The catalysed reaction is alpha-D-glucosamine 1-phosphate = D-glucosamine 6-phosphate. Its function is as follows. Catalyzes the conversion of glucosamine-6-phosphate to glucosamine-1-phosphate. The sequence is that of Phosphoglucosamine mutase from Brucella canis (strain ATCC 23365 / NCTC 10854 / RM-666).